The sequence spans 449 residues: Phosphoglucosamine mutase (449 aa).

Catalysis depends on S99, which acts as the Phosphoserine intermediate. Mg(2+) contacts are provided by S99, D239, D241, and D243. S99 is subject to Phosphoserine.

This sequence belongs to the phosphohexose mutase family. Requires Mg(2+) as cofactor. Activated by phosphorylation.

The enzyme catalyses alpha-D-glucosamine 1-phosphate = D-glucosamine 6-phosphate. In terms of biological role, catalyzes the conversion of glucosamine-6-phosphate to glucosamine-1-phosphate. The chain is Phosphoglucosamine mutase from Finegoldia magna (strain ATCC 29328 / DSM 20472 / WAL 2508) (Peptostreptococcus magnus).